We begin with the raw amino-acid sequence, 540 residues long: Putative sel1-like repeat-containing protein R815 (540 aa).

Sel1-like repeat units follow at residues 129–164 (IDAQTNYGLVNEYGIGVKKNIKKAIKWYKLSCYKEN), 165–200 (LFGLLFLGSLYERGYGVSCDKHMAFNLYEKATKHNY), 201–236 (PAVKRQLAFMYRTGSGTTKNINKSHELYREAANQGY), 237–272 (PLAQYALALQCKYGHGCIKNYKEAETWLIRSYNNGC), 273–308 (LYATYSLARLYIETKSPLRNYSRAFELMQEAASENY), and 309–344 (LLAINYLAKIYKNGIGVNKNISRAIYWYYKAGNSTK).

The polypeptide is Putative sel1-like repeat-containing protein R815 (Acanthamoeba polyphaga (Amoeba)).